A 467-amino-acid polypeptide reads, in one-letter code: ATP-dependent rRNA helicase rrp3 (467 aa).

A disordered region spans residues 1–48 (MPGVKKRKVAREAPAPAPAQESDVESSTPEQTQEPEAQEQEQEEGQSK). Positions 48–76 (KTFKELGIIEQLCEACETMGYKAPTPIQR) match the Q motif motif. The 172-residue stretch at 79–250 (IPLALKGRDL…RASLSNPLRV (172 aa)) folds into the Helicase ATP-binding domain. 92 to 99 (AETGSGKT) is an ATP binding site. The short motif at 198 to 201 (DEAD) is the DEAD box element. Positions 262–422 (TLLQSYLFIP…EYDCPKDEVM (161 aa)) constitute a Helicase C-terminal domain. The segment at 439–467 (MKDYNEKKGSRGKKFGGKRSRDEMDQEEG) is disordered.

The protein belongs to the DEAD box helicase family. DDX47/RRP3 subfamily. In terms of assembly, interacts with the SSU processome.

The protein localises to the nucleus. It carries out the reaction ATP + H2O = ADP + phosphate + H(+). Its function is as follows. ATP-dependent rRNA helicase required for pre-ribosomal RNA processing. Involved in the maturation of the 35S-pre-rRNA and to its cleavage to mature 18S rRNA. This chain is ATP-dependent rRNA helicase rrp3, found in Aspergillus niger (strain ATCC MYA-4892 / CBS 513.88 / FGSC A1513).